We begin with the raw amino-acid sequence, 126 residues long: Probable small nuclear ribonucleoprotein Sm D1 (126 aa).

In terms of domain architecture, Sm spans 2 to 74; the sequence is KLVRFLMKLS…IRYIILPDPL (73 aa). Residues 86–126 form a disordered region; that stretch reads RKKARAARAGASRGRGRGGMRGGRGGRGRGRGGPRGGGPRR. Residues 99–126 show a composition bias toward basic residues; it reads GRGRGGMRGGRGGRGRGRGGPRGGGPRR.

The protein belongs to the snRNP core protein family.

The protein resides in the nucleus. It localises to the cytoplasm. Its subcellular location is the cytosol. Functionally, plays a role in pre-mRNA splicing as a core component of the spliceosomal U1, U2, U4 and U5 small nuclear ribonucleoproteins (snRNPs), the building blocks of the spliceosome. The protein is Probable small nuclear ribonucleoprotein Sm D1 (snr-3) of Caenorhabditis elegans.